The following is a 506-amino-acid chain: MMRRLHSSRRFSGSLLALALGLALPLAHAADKPAAGKPAASQPAASKPQGGEQFVDGIAAIVNKDVITMREVQDGVKRAKVDLKERGIQLPDDNVLQKQVLQRLIFDRLERQEADRLGIRVDDAQVTQAINMVASRNKLTPQQLRAEVEKNGLSWDDYRKSLREEIRTDRLRQRTIDNHIIITDAEVDAYLKDQARNPALQPQSAQAPVQEAPAAATGPVMLALGQILVRVPEGASPDTVASLRKKAEDILARLKRGDDFASVAAASSDGPEALEGGVMGVRPIDGWPDLFVKAVSNVPAGQVSGIIQSGNGFHILKVLQRGQAGAPAPARAAAPMPAPAAGRAAQGPVQVTQTHARHILIKTSAVMSDQQARQRLEQVRQRLESGSAKFEDMARQYSQDATAPQGGDLGWVNPGEMVPSFEAAMNSLKPGEISQPVESPFGWHLVQVLERRQKDVTDEMQRMQARQALFERRAGPAFEDWMEQLRAQAYIDNRLEKQERIEQNNR.

The first 29 residues, 1–29, serve as a signal peptide directing secretion; it reads MMRRLHSSRRFSGSLLALALGLALPLAHA. PpiC domains are found at residues 219–320 and 351–450; these read PVML…KVLQ and VTQT…QVLE.

The protein localises to the periplasm. The enzyme catalyses [protein]-peptidylproline (omega=180) = [protein]-peptidylproline (omega=0). Chaperone involved in the correct folding and assembly of outer membrane proteins. Recognizes specific patterns of aromatic residues and the orientation of their side chains, which are found more frequently in integral outer membrane proteins. May act in both early periplasmic and late outer membrane-associated steps of protein maturation. The polypeptide is Chaperone SurA (Bordetella avium (strain 197N)).